We begin with the raw amino-acid sequence, 345 residues long: uncharacterized protein (345 aa).

Positions 1–98 (MNDEMKGKSG…ISGKSFIDPE (98 aa)) are disordered. 3 stretches are compositionally biased toward basic and acidic residues: residues 18 to 27 (RSDDDSDKRT), 42 to 68 (SRAD…EDSP), and 76 to 86 (PGDETPEKADH).

It belongs to the class IV-like SAM-binding methyltransferase superfamily. RNA methyltransferase TrmH family.

This is an uncharacterized protein from Escherichia coli O157:H7.